Here is a 478-residue protein sequence, read N- to C-terminus: MYRVAKASEYLVITGAGIDDVKLEKKAWIFPGQSCTVFDLSPVNYTFEVQAMSAEKLPFVLPAVFTIGPRVDDYESLLKYAKLISPHDKLSNHVNELVQGIIEGETRVLVASMTMEEVFRGTKEFKQEVFDKVQLELNQFGLWIYNANVKQLVDVPGHEYFSYLGQKTQMEAANQARVDVAEAKMKGEIGSKLREGQTIQNAAKIDAETKVIAMQRAGEGEKQGIKVRTEVKVFENQREAEVAEANSELAKKKAAWTMAAQVAELEAAKAVALREAELQGEVERMNALTTTEKLKADFLSKASVEYDTKVQEANWELYKKQKEAEAILYEKKAEAEAQKALADSTFYARKQEAEAELYAKKKEAEGIMTLGNAQGAYVSTLLNALGNNYTAVRDYLMINGGMFQEIAKINAEAVRGLEPKISIWTNGGDNNGGITEGAMGMKEVAGVYKMLPPLFKTVHEQTGMFPPAWMGSLPDKNS.

Cysteine 35 carries S-palmitoyl cysteine lipidation. Residues glutamate 235–glutamate 277 are a coiled coil.

It belongs to the band 7/mec-2 family. Flotillin subfamily. In terms of processing, may be palmitoylated. Expressed in all plant organs. Primarily expressed in vascular tissues. No change in spatial expression in root upon inoculation. Expression limited to the nodule vascular tissue.

It localises to the cell membrane. The protein localises to the membrane. The protein resides in the caveola. Its function is as follows. May act as a scaffolding protein within caveolar membranes, functionally participating in formation of caveolae or caveolae-like vesicles. May be involved in nodule formation. In Medicago truncatula (Barrel medic), this protein is Flotillin-like protein 1 (FLOT1).